Consider the following 576-residue polypeptide: RING finger and SPRY domain-containing protein 1 (576 aa).

The signal sequence occupies residues 1-16 (MIVFGWAVFLASRSLG). S50 carries the phosphoserine modification. Positions 50-99 (SGTDDSVDTQQQQAENSAVPTADTRSQPRDPVRPPRRGRGPHEPRRKKQN) are disordered. Over residues 57–68 (DTQQQQAENSAV) the composition is skewed to polar residues. Positions 83 to 97 (PPRRGRGPHEPRRKK) are enriched in basic residues. Positions 300 to 483 (LFLKEGRQLT…CEFNFGAKPF (184 aa)) constitute a B30.2/SPRY domain. Residue N314 is glycosylated (N-linked (GlcNAc...) asparagine). The RING-type zinc-finger motif lies at 527-562 (CSLCCDEVADTQLKPCGHSDLCMDCALQLETCPLCR).

The protein localises to the secreted. This Pongo abelii (Sumatran orangutan) protein is RING finger and SPRY domain-containing protein 1 (RSPRY1).